We begin with the raw amino-acid sequence, 122 residues long: Large ribosomal subunit protein uL18 (122 aa).

Belongs to the universal ribosomal protein uL18 family. As to quaternary structure, part of the 50S ribosomal subunit; part of the 5S rRNA/L5/L18/L25 subcomplex. Contacts the 5S and 23S rRNAs.

This is one of the proteins that bind and probably mediate the attachment of the 5S RNA into the large ribosomal subunit, where it forms part of the central protuberance. In Agathobacter rectalis (strain ATCC 33656 / DSM 3377 / JCM 17463 / KCTC 5835 / VPI 0990) (Eubacterium rectale), this protein is Large ribosomal subunit protein uL18.